Reading from the N-terminus, the 94-residue chain is Protein canopy homolog 1 (94 aa).

The protein belongs to the canopy family.

This Mus musculus (Mouse) protein is Protein canopy homolog 1 (Cnpy1).